Reading from the N-terminus, the 1408-residue chain is TSET complex member tstA (1408 aa).

Disordered stretches follow at residues 259–347 (FWPT…SIIA), 998–1055 (QQSS…AVGS), and 1091–1139 (SSSS…TNLN). The segment covering 266-308 (NNNNNNNNQQINNNNNNNNNNNNNNNNNNNNNNNNNNNNNQNN) has biased composition (low complexity). Positions 309-318 (LINGISSMNL) are enriched in polar residues. 2 stretches are compositionally biased toward low complexity: residues 319 to 347 (SSITGTTTTTTTTGNSPITSPTSPTSIIA) and 998 to 1051 (QQSS…ISTS).

The protein belongs to the TPLATE family. In terms of assembly, component of the TSET complex, a heterohexamer composed of tstA, tstB, tstC, tstD, tstE and tstF, which may act in plasma membrane turnover. tstA, tstB, tstC and tstD are likely to be the core complex members with tstE and tstF acting as associated scaffold proteins.

This Dictyostelium discoideum (Social amoeba) protein is TSET complex member tstA.